The following is a 162-amino-acid chain: Lipoprotein signal peptidase (162 aa).

2 helical membrane passes run 66–86 (PFFI…FRKL) and 92–112 (LAAV…IDRV). Active-site residues include Asp119 and Asp137. The helical transmembrane segment at 132 to 152 (AFNVADSAICVGVALLALDMI) threads the bilayer.

It belongs to the peptidase A8 family.

The protein localises to the cell inner membrane. The catalysed reaction is Release of signal peptides from bacterial membrane prolipoproteins. Hydrolyzes -Xaa-Yaa-Zaa-|-(S,diacylglyceryl)Cys-, in which Xaa is hydrophobic (preferably Leu), and Yaa (Ala or Ser) and Zaa (Gly or Ala) have small, neutral side chains.. It functions in the pathway protein modification; lipoprotein biosynthesis (signal peptide cleavage). Functionally, this protein specifically catalyzes the removal of signal peptides from prolipoproteins. This chain is Lipoprotein signal peptidase, found in Geobacter metallireducens (strain ATCC 53774 / DSM 7210 / GS-15).